The primary structure comprises 319 residues: MSGDTCLTAVCPASGAKPKTYSFKGGCLGNKYIRLNVGGCLYYTTVQVLTRHDTMLKAMFSGRMEVLTDKEGWILIDRCGKHFGSILNYLRDDTIALPKSRHEIKELMAEAKYYLIQGLVDKCQTALQDTNDTYEAVCNIPIITSPKEEEKLIESSAKPVVKLLYNRSNNKYSYTSNSDDHLLKNIELFDKLSLRFNGRVLFIKDVIGDEICCWSFYGQGRKLAEVCCTSIVYATEKKQTKVEFPEARIYEETLNVLLYETPRVPDNSLLEATSRIRSQASHSEDDDGFELRDRVRRIHVKRYSTYDDRQLGHQSAYRD.

Residues 31–99 enclose the BTB domain; the sequence is KYIRLNVGGC…LRDDTIALPK (69 aa).

It belongs to the BACURD family. In terms of assembly, component of the BCR(TNFAIP1) E3 ubiquitin ligase complex, at least composed of cul3, tnfaip1/bacurd2 and rbx1.

It localises to the cytoplasm. It is found in the nucleus. The protein localises to the endosome. Its pathway is protein modification; protein ubiquitination. Its function is as follows. Substrate-specific adapter of a BCR (BTB-CUL3-RBX1) E3 ubiquitin-protein ligase complex involved in regulation of cytoskeleton structure. The BCR(TNFAIP1) E3 ubiquitin ligase complex mediates the ubiquitination of target proteins, leading to their degradation by the proteasome. In Xenopus laevis (African clawed frog), this protein is BTB/POZ domain-containing adapter for CUL3-mediated RhoA degradation protein 2 (tnfaip1).